The chain runs to 64 residues: DNA gyrase inhibitor YacG (64 aa).

4 residues coordinate Zn(2+): cysteine 9, cysteine 12, cysteine 28, and cysteine 32. Residues 45–64 form a disordered region; it reads NAIAGAPDMSDSDGWSEDQY. Acidic residues predominate over residues 54 to 64; it reads SDSDGWSEDQY.

Belongs to the DNA gyrase inhibitor YacG family. As to quaternary structure, interacts with GyrB. Zn(2+) is required as a cofactor.

Its function is as follows. Inhibits all the catalytic activities of DNA gyrase by preventing its interaction with DNA. Acts by binding directly to the C-terminal domain of GyrB, which probably disrupts DNA binding by the gyrase. The protein is DNA gyrase inhibitor YacG of Vibrio parahaemolyticus serotype O3:K6 (strain RIMD 2210633).